A 1057-amino-acid polypeptide reads, in one-letter code: MPKRDDIKTILVVGSGPIIIGQAAEFDYAGTQACLALKEEGYRVILVNSNPATIMTDKEIADKVYIEPLTHDFIARIIRKEQPDALLPTLGGQTGLNMAIQLHDSGVLEANNVKLLGTELESIQQAEDREMFRTLMNDLNVPVPESDIVNTVEQAFEFKEQVGYPLIVRPAFTMGGTGGGICHNDAELKEVVSNGLHYSPATQCLIEKSIAGYKEIEYEVMRDKNDNAIVVCNMENIDPVGIHTGDSIVVAPSQTLSDVEYQMLRDVSLKVIRALGIEGGCNVQLALDPHSLNYYIIEVNPRVSRSSALASKATGYPIAKLAAKIAVGLTLDEMLNPITGTSYAAFEPTLDYVISKIPRFPFDKFEKGERELGTQMKATGEVMAIGRTYEESLLKAIRSLEYGVHHLGLSNGESYELDYIKERIGHQDDERLFFIGEAIRRGTSLEELHNMTKIDYFFLNKFQNIIDIEHELKNHQGDLEYLKYAKDYGFSDKVIAHRWDKEEKDIYQLRMSQNIKPVYKMVDTCAAEFESTTPYYYGTYEYENESIVTDKEKILVLGSGPIRIGQGVEFDYATVHAVWAIQNAGYEAIIVNNNPETVSTDFSISDKLYFEPLTEEDVMNIINLEQPKGVVVQFGGQTAINLADKLAQHGVKILGTSLEDLNRAEDRKEFEALLREIAVPQPQGKTATSPKEALENAREIGYPVVVRPSYVLGGRAMEIVDNDQELENYMTQAVKASPEHPVLVDRYLTGKEIEVDAISDGETVVIPGIMEHIERAGVHSGDSIAVYPPQTLTQDEINTLEDYTIKLAKGLNIKGLINIQFVIAHDGVYVLEVNPRSSRTVPFLSKITDIQMAQLAMRAIMGETLAEIGFKQGIQPYSEGVYVKAPVFSFNKLKNVDITLGPEMKSTGEVMGKDLTLEKALYKGLTGSGFEVKDHGTVLMTVSDKDKDEIVKIAHRLNEIGYKILATRGTAQKLKDHNIPVEVVGKIGGEDDLLTRIQNGEVQIVINTMTKGKEIERDGFQIRRTTVENGVPCLTSLDTASALTNVIESMTFTMRNV.

The interval 1–401 is carboxyphosphate synthetic domain; that stretch reads MPKRDDIKTI…SLLKAIRSLE (401 aa). Residues Arg129, Arg169, Gly175, Gly176, Lys208, Ile210, Glu215, Gly241, Ile242, His243, Gln284, and Glu298 each contribute to the ATP site. In terms of domain architecture, ATP-grasp 1 spans 133 to 327; that stretch reads RTLMNDLNVP…IAKLAAKIAV (195 aa). Mg(2+)-binding residues include Gln284, Glu298, and Asn300. The Mn(2+) site is built by Gln284, Glu298, and Asn300. The interval 402–546 is oligomerization domain; it reads YGVHHLGLSN…YGTYEYENES (145 aa). A carbamoyl phosphate synthetic domain region spans residues 547–929; that stretch reads IVTDKEKILV…ALYKGLTGSG (383 aa). Residues 671–861 enclose the ATP-grasp 2 domain; the sequence is EALLREIAVP…MAQLAMRAIM (191 aa). 10 residues coordinate ATP: Arg707, Arg746, Leu748, Glu752, Gly777, Val778, His779, Ser780, Gln820, and Glu832. The Mg(2+) site is built by Gln820, Glu832, and Asn834. 3 residues coordinate Mn(2+): Gln820, Glu832, and Asn834. In terms of domain architecture, MGS-like spans 930 to 1057; it reads FEVKDHGTVL…ESMTFTMRNV (128 aa). The tract at residues 930 to 1057 is allosteric domain; sequence FEVKDHGTVL…ESMTFTMRNV (128 aa).

This sequence belongs to the CarB family. As to quaternary structure, composed of two chains; the small (or glutamine) chain promotes the hydrolysis of glutamine to ammonia, which is used by the large (or ammonia) chain to synthesize carbamoyl phosphate. Tetramer of heterodimers (alpha,beta)4. Requires Mg(2+) as cofactor. Mn(2+) serves as cofactor.

It carries out the reaction hydrogencarbonate + L-glutamine + 2 ATP + H2O = carbamoyl phosphate + L-glutamate + 2 ADP + phosphate + 2 H(+). The catalysed reaction is hydrogencarbonate + NH4(+) + 2 ATP = carbamoyl phosphate + 2 ADP + phosphate + 2 H(+). Its pathway is amino-acid biosynthesis; L-arginine biosynthesis; carbamoyl phosphate from bicarbonate: step 1/1. It functions in the pathway pyrimidine metabolism; UMP biosynthesis via de novo pathway; (S)-dihydroorotate from bicarbonate: step 1/3. Large subunit of the glutamine-dependent carbamoyl phosphate synthetase (CPSase). CPSase catalyzes the formation of carbamoyl phosphate from the ammonia moiety of glutamine, carbonate, and phosphate donated by ATP, constituting the first step of 2 biosynthetic pathways, one leading to arginine and/or urea and the other to pyrimidine nucleotides. The large subunit (synthetase) binds the substrates ammonia (free or transferred from glutamine from the small subunit), hydrogencarbonate and ATP and carries out an ATP-coupled ligase reaction, activating hydrogencarbonate by forming carboxy phosphate which reacts with ammonia to form carbamoyl phosphate. This chain is Carbamoyl phosphate synthase large chain, found in Staphylococcus epidermidis (strain ATCC 12228 / FDA PCI 1200).